A 364-amino-acid chain; its full sequence is Chorismate synthase (364 aa).

The segment at 41–60 (MQHDLDRRRPGTSRYTTARR) is disordered. Positions 48 and 54 each coordinate NADP(+). Residues 125–127 (RSS), 238–239 (NA), glycine 278, 293–297 (KPTSS), and arginine 319 each bind FMN.

This sequence belongs to the chorismate synthase family. As to quaternary structure, homotetramer. FMNH2 is required as a cofactor.

The enzyme catalyses 5-O-(1-carboxyvinyl)-3-phosphoshikimate = chorismate + phosphate. It functions in the pathway metabolic intermediate biosynthesis; chorismate biosynthesis; chorismate from D-erythrose 4-phosphate and phosphoenolpyruvate: step 7/7. In terms of biological role, catalyzes the anti-1,4-elimination of the C-3 phosphate and the C-6 proR hydrogen from 5-enolpyruvylshikimate-3-phosphate (EPSP) to yield chorismate, which is the branch point compound that serves as the starting substrate for the three terminal pathways of aromatic amino acid biosynthesis. This reaction introduces a second double bond into the aromatic ring system. The protein is Chorismate synthase of Shewanella sp. (strain MR-4).